The primary structure comprises 179 residues: Gamma-glutamyl cyclotransferase verK (179 aa).

This sequence belongs to the class-I pyridoxal-phosphate-dependent aminotransferase family.

The enzyme catalyses an alpha-(gamma-L-glutamyl)-L-amino acid = 5-oxo-L-proline + an L-alpha-amino acid. It functions in the pathway mycotoxin biosynthesis. In terms of biological role, gamma-glutamyl cyclotransferase; part of the gene cluster that mediates the biosynthesis of 11'-deoxyverticillin A, one of the dimeric epipolythiodioxopiperazines (ETPs) from the verticillin family that act as mycotoxins. 11'-deoxyverticillin A is required for normal conidiation. The nonribosomal peptide synthetase verP is speculated to be responsible for condensation of amino acids to form the carbon skeleton of verticillin, whereas the cluster-specific tailoring enzymes are involved in further modifications leading to the production of 11'-deoxyverticillin A. This chain is Gamma-glutamyl cyclotransferase verK, found in Clonostachys rogersoniana.